Here is a 170-residue protein sequence, read N- to C-terminus: Cathelicidin antimicrobial peptide (170 aa).

An N-terminal signal peptide occupies residues 1 to 30; that stretch reads MKTQRDGHSLGGWSLMLLLLGLLMPLAIVA. A propeptide spans 31-131 (cathelin-like domain (CLD)); sequence QVLSYKEAVL…DISCDKDNRR (101 aa). 2 cysteine pairs are disulfide-bonded: C86-C97 and C108-C125. The segment at 150 to 162 is active core; it reads FKRIVQRIKDFLQ.

The protein belongs to the cathelicidin family. In terms of assembly, monomer, homodimer or homotrimer (in vitro). Oligomerizes as tetra- or hexamer in solution (in vitro). Proteolytically cleaved by proteinase PRTN3 into antibacterial peptide LL-37. Proteolytically cleaved by cathepsin CTSG and neutrophil elastase ELANE. Post-translationally, resistant to proteolytic degradation in solution, and when bound to both zwitterionic (mimicking mammalian membranes) and negatively charged membranes (mimicking bacterial membranes). In terms of processing, after secretion onto the skin surface, the CAMP gene product is processed by a serine protease-dependent mechanism into multiple novel antimicrobial peptides distinct from and shorter than cathelicidin LL-37. These peptides show enhanced antimicrobial action, acquiring the ability to kill skin pathogens such as S.aureus, E.coli and C.albicans. These peptides have lost the ability to stimulate CXCL8/IL8 release from keratinocytes. The peptides act synergistically, killing bacteria at lower concentrations when present together, and maintain activity at increased salt condition.

It localises to the secreted. It is found in the vesicle. Functionally, antimicrobial protein that is an integral component of the innate immune system. Binds to bacterial lipopolysaccharides (LPS). Acts via neutrophil N-formyl peptide receptors to enhance the release of CXCL2. Postsecretory processing generates multiple cathelicidin antimicrobial peptides with various lengths which act as a topical antimicrobial defense in sweat on skin. The unprocessed precursor form, cathelicidin antimicrobial peptide, inhibits the growth of Gram-negative E.coli and E.aerogenes with efficiencies comparable to that of the mature peptide LL-37 (in vitro). Its function is as follows. Antimicrobial peptide that is an integral component of the innate immune system. Binds to bacterial lipopolysaccharides (LPS). Causes membrane permeabilization by forming transmembrane pores (in vitro). Causes lysis of E.coli. Exhibits antimicrobial activity against Gram-negative bacteria such as P.aeruginosa, S.typhimurium, E.aerogenes, E.coli and P.syringae, Gram-positive bacteria such as L.monocytogenes, S.epidermidis, S.pyogenes and S.aureus, as well as vancomycin-resistant enterococci (in vitro). Exhibits antimicrobial activity against methicillin-resistant S.aureus, P.mirabilis, and C.albicans in low-salt media, but not in media containing 100 mM NaCl (in vitro). Forms chiral supramolecular assemblies with quinolone signal (PQS) molecules of P.aeruginosa, which may lead to interference of bacterial quorum signaling and perturbance of bacterial biofilm formation. May form supramolecular fiber-like assemblies on bacterial membranes. Induces cytokine and chemokine producation as well as TNF/TNFA and CSF2/GMCSF production in normal human keratinocytes. Exhibits hemolytic activity against red blood cells. Exhibits antimicrobial activity against E.coli and B.megaterium (in vitro). This is Cathelicidin antimicrobial peptide from Hylobates moloch (Silvery gibbon).